A 409-amino-acid chain; its full sequence is MALGTRNMNMNLHGESKHTFNNENVSARLGGKSIAVQKPAQRAALGNISNVVRTAQAGSKKVVKKDTRQKAMTKTKATSSLHAVVGLPVEDLPTEMRSTSPDVLDAMEVDQAIEAFSQQLIALQVEDIDKDDGDNPQLCSEYAKDIYLYLRRLEVEMMVPANYLDRQETQITGRMRLILVDWLVQVHLRFHLLQETLFLTVQLIDRFLAEHSVSKGKLQLVGVTAMFIASKYEEMYPPEINDFVYITDNAYTKAQIRQMEIAMLKGLKYKLGKPLCLHFLRRNSKAAGVDAQKHTLAKYLMEITLPEYSMVQYSPSEIAAAAIYLSMTLLDPETHSSWCPKMTHYSMYSEDHLRPIVQKIVQILLRDDSASQKYSAVKTKYGSSKFMKISGIAQLDSSLLKQIAQGSNE.

This sequence belongs to the cyclin family. Cyclin AB subfamily. As to quaternary structure, interacts with the CDK1 protein kinase to form a serine/threonine kinase holoenzyme complex also known as maturation promoting factor (MPF). The cyclin subunit imparts substrate specificity to the complex.

Its function is as follows. Essential for the control of the cell cycle at the G2/M (mitosis) transition. The chain is G2/mitotic-specific cyclin-B from Arbacia punctulata (Punctuate sea urchin).